Consider the following 48-residue polypeptide: Protein YodE (48 aa).

This Escherichia coli (strain K12) protein is Protein YodE.